A 209-amino-acid polypeptide reads, in one-letter code: Octanoyltransferase (209 aa).

Residues Glu-29–Ser-209 form the BPL/LPL catalytic domain. Substrate is bound by residues Arg-71–His-78, Ser-138–Gly-140, and Gly-151–Ala-153. Cys-169 (acyl-thioester intermediate) is an active-site residue.

This sequence belongs to the LipB family.

The protein localises to the cytoplasm. It carries out the reaction octanoyl-[ACP] + L-lysyl-[protein] = N(6)-octanoyl-L-lysyl-[protein] + holo-[ACP] + H(+). Its pathway is protein modification; protein lipoylation via endogenous pathway; protein N(6)-(lipoyl)lysine from octanoyl-[acyl-carrier-protein]: step 1/2. In terms of biological role, catalyzes the transfer of endogenously produced octanoic acid from octanoyl-acyl-carrier-protein onto the lipoyl domains of lipoate-dependent enzymes. Lipoyl-ACP can also act as a substrate although octanoyl-ACP is likely to be the physiological substrate. This chain is Octanoyltransferase, found in Hydrogenovibrio crunogenus (strain DSM 25203 / XCL-2) (Thiomicrospira crunogena).